The following is a 285-amino-acid chain: 2-dehydro-3-deoxyphosphooctonate aldolase (285 aa).

It belongs to the KdsA family.

The protein resides in the cytoplasm. It catalyses the reaction D-arabinose 5-phosphate + phosphoenolpyruvate + H2O = 3-deoxy-alpha-D-manno-2-octulosonate-8-phosphate + phosphate. Its pathway is carbohydrate biosynthesis; 3-deoxy-D-manno-octulosonate biosynthesis; 3-deoxy-D-manno-octulosonate from D-ribulose 5-phosphate: step 2/3. It functions in the pathway bacterial outer membrane biogenesis; lipopolysaccharide biosynthesis. This is 2-dehydro-3-deoxyphosphooctonate aldolase from Delftia acidovorans (strain DSM 14801 / SPH-1).